The primary structure comprises 368 residues: Apolipoprotein A-V (368 aa).

The first 20 residues, 1-20 (MAAVITWALALLAVFASTQA), serve as a signal peptide directing secretion. Ser52 is modified (phosphoserine). Positions 231 to 255 (TRKAKDLHTSIQRNLDQLRDELSAF) form a coiled coil. The disordered stretch occupies residues 305-333 (EEIQHQLAPPPPSHSAFAPELGHSDSNKA).

Belongs to the apolipoprotein A1/A4/E family. In terms of assembly, interacts with GPIHBP1. Interacts with SORL1; this interaction leads to APOA5 internalization and sorting either to lysosomes and degradation, or to the trans-Golgi network. Phosphorylated by FAM20C in the extracellular medium. Liver.

The protein resides in the secreted. The protein localises to the early endosome. It localises to the late endosome. It is found in the golgi apparatus. Its subcellular location is the trans-Golgi network. Minor apolipoprotein mainly associated with HDL and to a lesser extent with VLDL. May also be associated with chylomicrons. Important determinant of plasma triglyceride (TG) levels by both being a potent stimulator of apo-CII lipoprotein lipase (LPL) TG hydrolysis and an inhibitor of the hepatic VLDL-TG production rate (without affecting the VLDL-apoB production rate). Activates poorly lecithin:cholesterol acyltransferase (LCAT) and does not enhance efflux of cholesterol from macrophages. Binds heparin. The chain is Apolipoprotein A-V (Apoa5) from Mus musculus (Mouse).